Consider the following 492-residue polypeptide: Cytochrome P450 2A12 (492 aa).

Heme is bound at residue cysteine 437.

Belongs to the cytochrome P450 family. It depends on heme as a cofactor. In terms of tissue distribution, liver.

It is found in the endoplasmic reticulum membrane. The protein resides in the microsome membrane. The enzyme catalyses an organic molecule + reduced [NADPH--hemoprotein reductase] + O2 = an alcohol + oxidized [NADPH--hemoprotein reductase] + H2O + H(+). In terms of biological role, highly active in the 7-alpha-hydroxylation of testosterone. The sequence is that of Cytochrome P450 2A12 (Cyp2a12) from Mus musculus (Mouse).